Here is a 278-residue protein sequence, read N- to C-terminus: Ankyrin repeat and SOCS box protein 13 (278 aa).

6 ANK repeats span residues 18 to 47 (VERT…CVNQ), 51 to 80 (DSIT…QVDA), 84 to 113 (DGST…KVNP), 116 to 145 (YTAS…NLEA), 149 to 178 (HFGT…NVNA), and 181 to 210 (LHET…NIYA). Residues 229–278 (AKCFEYYEKTPLSLSQLCRVSLRKATGVRGLEKVAKLNIPPRLIDYLSYN) form the SOCS box domain.

This sequence belongs to the ankyrin SOCS box (ASB) family.

Its pathway is protein modification; protein ubiquitination. Its function is as follows. May be a substrate-recognition component of a SCF-like ECS (Elongin-Cullin-SOCS-box protein) E3 ubiquitin-protein ligase complex which mediates the ubiquitination and subsequent proteasomal degradation of target proteins. This chain is Ankyrin repeat and SOCS box protein 13 (Asb13), found in Mus musculus (Mouse).